Consider the following 218-residue polypeptide: Large ribosomal subunit protein uL3 (218 aa).

Belongs to the universal ribosomal protein uL3 family. Part of the 50S ribosomal subunit. Forms a cluster with proteins L14 and L19.

In terms of biological role, one of the primary rRNA binding proteins, it binds directly near the 3'-end of the 23S rRNA, where it nucleates assembly of the 50S subunit. In Corynebacterium diphtheriae (strain ATCC 700971 / NCTC 13129 / Biotype gravis), this protein is Large ribosomal subunit protein uL3.